A 298-amino-acid chain; its full sequence is Inosose dehydratase (298 aa).

It belongs to the IolE/MocC family. Requires glutathione as cofactor. It depends on Co(2+) as a cofactor. Mn(2+) serves as cofactor.

It carries out the reaction scyllo-inosose = 3D-3,5/4-trihydroxycyclohexane-1,2-dione + H2O. It functions in the pathway polyol metabolism; myo-inositol degradation into acetyl-CoA; acetyl-CoA from myo-inositol: step 2/7. In terms of biological role, catalyzes the dehydration of inosose (2-keto-myo-inositol, 2KMI or 2,4,6/3,5-pentahydroxycyclohexanone) to 3D-(3,5/4)-trihydroxycyclohexane-1,2-dione (D-2,3-diketo-4-deoxy-epi-inositol). The polypeptide is Inosose dehydratase (Clostridium botulinum (strain Eklund 17B / Type B)).